The primary structure comprises 573 residues: MSKQIKGIAASEGISLARALVIKETKLDIQKQLISDVDQEIIKLEQAIEKSIADLKKIQQITLKKLGEEKAAIFDAHQDIANDPAIKEEVVELIKKEKVNAEYALFTVSNNYFEMFSQLEDPYFKERSADIKDVSLRIISHILGLEIHDLSTIDKEVIIISDDLTPSQTAQLDKKFVKGFLTNVGGRTSHAAIMARSLEIPAILGLKNITELVKTDDLIALDGSSGIVELDLNDDDIKNYQTKVQQYIELKEQLKKFKDEPSLTKDKIKKLIEANIGSTNDVQSVLDSGAEGIGLFRTEFLYMDNDHFPTEEEQFEAYKKVVSQIKHLVVFRTLDIGGDKKLSYFKFDEEMNPFLGYRAIRFTLDRKDIFKDQIRALLRASAFGKLGIMFPMIATIDEFKQAKTFVEECKIELDKEGIKYDNQVQIGMMVEIPSAAILADQFAKYADFFSIGTNDLIQYSFASDRMNQNVSYLYQPLNPSLLRLIQLTISGAHKHNKWVGMCGEMAGDSKALPILLGLDLDAFSMSATSVLKARSLMSKIEFSKAKILANKVLECETNEQVNKLVEDFLNNLD.

Histidine 190 acts as the Tele-phosphohistidine intermediate in catalysis. 2 residues coordinate phosphoenolpyruvate: arginine 297 and arginine 332. Mg(2+) is bound by residues glutamate 431 and aspartate 455. Phosphoenolpyruvate contacts are provided by residues 454-455 (ND) and arginine 465. The active-site Proton donor is the cysteine 502.

This sequence belongs to the PEP-utilizing enzyme family. Homodimer. Mg(2+) is required as a cofactor.

It is found in the cytoplasm. The enzyme catalyses L-histidyl-[protein] + phosphoenolpyruvate = N(pros)-phospho-L-histidyl-[protein] + pyruvate. Its activity is regulated as follows. Irreversibly inhibited the sulfhydryl reagent N-ethylmaleimide (NEM). Its function is as follows. General (non sugar-specific) component of the phosphoenolpyruvate-dependent sugar phosphotransferase system (sugar PTS). This major carbohydrate active-transport system catalyzes the phosphorylation of incoming sugar substrates concomitantly with their translocation across the cell membrane. Enzyme I transfers the phosphoryl group from phosphoenolpyruvate (PEP) to the phosphoryl carrier protein (HPr). The sequence is that of Phosphoenolpyruvate-protein phosphotransferase (ptsI) from Mycoplasma capricolum subsp. capricolum (strain California kid / ATCC 27343 / NCTC 10154).